A 623-amino-acid polypeptide reads, in one-letter code: Fanconi anemia group G protein homolog (623 aa).

TPR repeat units follow at residues 251–284, 349–382, 458–491, and 517–550; these read VQVYTALGACLRKMGNPQRALLYLTEALKVGTTC, SQAKHLLASRCLQTGRAEDAAEHYLDLLAMLLGG, SATHLLQGQAWSQLKAQKEALSEFSQCLELLFRT, and VAALISRGLEWVASGQDTKALSDFLLSVQICPGN.

In terms of assembly, belongs to the multisubunit FA complex composed of FANCA, FANCB, FANCC, FANCE, FANCF, FANCG, FANCL/PHF9 and FANCM. In complex with FANCF, FANCA and FANCL, but not with FANCC, nor FANCE, interacts with HES1; this interaction may be essential for the stability and nuclear localization of FA core complex proteins. The complex with FANCC and FANCG may also include EIF2AK2 and HSP70. In terms of tissue distribution, highest expression levels in spleen, thymus and testis.

The protein resides in the nucleus. Its function is as follows. DNA repair protein that may operate in a postreplication repair or a cell cycle checkpoint function. May be implicated in interstrand DNA cross-link repair and in the maintenance of normal chromosome stability. Candidate tumor suppressor gene. This chain is Fanconi anemia group G protein homolog (Fancg), found in Mus musculus (Mouse).